Consider the following 337-residue polypeptide: Holliday junction branch migration complex subunit RuvB (337 aa).

Residues 4 to 184 form a large ATPase domain (RuvB-L) region; sequence ADRLIQPQVL…FGIPLRLEFY (181 aa). ATP is bound by residues Arg24, Gly65, Lys68, Thr69, Thr70, 131–133, Arg174, Tyr184, and Arg221; that span reads EDY. Thr69 is a binding site for Mg(2+). Residues 185-255 are small ATPAse domain (RuvB-S); it reads NVKDLCTIVT…VAQQALDMLD (71 aa). The segment at 258–337 is head domain (RuvB-H); the sequence is QEGFDYLDRK…FNIITPDVPK (80 aa). DNA-binding residues include Arg294, Arg313, and Arg318.

This sequence belongs to the RuvB family. Homohexamer. Forms an RuvA(8)-RuvB(12)-Holliday junction (HJ) complex. HJ DNA is sandwiched between 2 RuvA tetramers; dsDNA enters through RuvA and exits via RuvB. An RuvB hexamer assembles on each DNA strand where it exits the tetramer. Each RuvB hexamer is contacted by two RuvA subunits (via domain III) on 2 adjacent RuvB subunits; this complex drives branch migration. In the full resolvosome a probable DNA-RuvA(4)-RuvB(12)-RuvC(2) complex forms which resolves the HJ.

Its subcellular location is the cytoplasm. It catalyses the reaction ATP + H2O = ADP + phosphate + H(+). The RuvA-RuvB-RuvC complex processes Holliday junction (HJ) DNA during genetic recombination and DNA repair, while the RuvA-RuvB complex plays an important role in the rescue of blocked DNA replication forks via replication fork reversal (RFR). RuvA specifically binds to HJ cruciform DNA, conferring on it an open structure. The RuvB hexamer acts as an ATP-dependent pump, pulling dsDNA into and through the RuvAB complex. RuvB forms 2 homohexamers on either side of HJ DNA bound by 1 or 2 RuvA tetramers; 4 subunits per hexamer contact DNA at a time. Coordinated motions by a converter formed by DNA-disengaged RuvB subunits stimulates ATP hydrolysis and nucleotide exchange. Immobilization of the converter enables RuvB to convert the ATP-contained energy into a lever motion, pulling 2 nucleotides of DNA out of the RuvA tetramer per ATP hydrolyzed, thus driving DNA branch migration. The RuvB motors rotate together with the DNA substrate, which together with the progressing nucleotide cycle form the mechanistic basis for DNA recombination by continuous HJ branch migration. Branch migration allows RuvC to scan DNA until it finds its consensus sequence, where it cleaves and resolves cruciform DNA. This chain is Holliday junction branch migration complex subunit RuvB, found in Shewanella denitrificans (strain OS217 / ATCC BAA-1090 / DSM 15013).